The following is a 260-amino-acid chain: Phosphate import ATP-binding protein PstB (260 aa).

Residues Val-14–Ile-255 enclose the ABC transporter domain. Gly-46 to Ser-53 contributes to the ATP binding site.

Belongs to the ABC transporter superfamily. Phosphate importer (TC 3.A.1.7) family. As to quaternary structure, the complex is composed of two ATP-binding proteins (PstB), two transmembrane proteins (PstC and PstA) and a solute-binding protein (PstS).

It is found in the cell inner membrane. The catalysed reaction is phosphate(out) + ATP + H2O = ADP + 2 phosphate(in) + H(+). Part of the ABC transporter complex PstSACB involved in phosphate import. Responsible for energy coupling to the transport system. The sequence is that of Phosphate import ATP-binding protein PstB from Syntrophotalea carbinolica (strain DSM 2380 / NBRC 103641 / GraBd1) (Pelobacter carbinolicus).